The sequence spans 288 residues: Mediator of RNA polymerase II transcription subunit 8 (288 aa).

Residues 4–58 (EELKQLELLRNRFAQLTSNLGSLRTSVSNSNPLPTYESLQASVNILQANIRSIQD) adopt a coiled-coil conformation. 3 disordered regions span residues 122–150 (GGVHRRGEHDYDDEGTYGMDEDGDDAPQD), 191–245 (VRTG…GGGM), and 266–288 (PGNVPIESKRIQTVPTRRVAPPR). 2 stretches are compositionally biased toward acidic residues: residues 131–148 (DYDDEGTYGMDEDGDDAP) and 200–221 (EESEDDDEDEEEEEEDEEEDEA). Positions 180–228 (TAEERAAGIENVRTGLRQTLEESEDDDEDEEEEEEDEEEDEAAAAAGNA) form a coiled coil. The segment covering 227 to 245 (NAGGLATGAGGSAAAGGGM) has biased composition (gly residues).

The protein belongs to the Mediator complex subunit 8 family. As to quaternary structure, component of the Mediator complex.

It is found in the nucleus. In terms of biological role, component of the Mediator complex, a coactivator involved in the regulated transcription of nearly all RNA polymerase II-dependent genes. Mediator functions as a bridge to convey information from gene-specific regulatory proteins to the basal RNA polymerase II transcription machinery. Mediator is recruited to promoters by direct interactions with regulatory proteins and serves as a scaffold for the assembly of a functional preinitiation complex with RNA polymerase II and the general transcription factors. This Chaetomium globosum (strain ATCC 6205 / CBS 148.51 / DSM 1962 / NBRC 6347 / NRRL 1970) (Soil fungus) protein is Mediator of RNA polymerase II transcription subunit 8 (MED8).